A 174-amino-acid chain; its full sequence is Co-chaperone protein HscB homolog (174 aa).

Residues 2–74 enclose the J domain; the sequence is NYFELFKFPP…IRRAEHMLSL (73 aa).

Belongs to the HscB family. Interacts with HscA and stimulates its ATPase activity.

Functionally, co-chaperone involved in the maturation of iron-sulfur cluster-containing proteins. Seems to help targeting proteins to be folded toward HscA. This is Co-chaperone protein HscB homolog from Shewanella oneidensis (strain ATCC 700550 / JCM 31522 / CIP 106686 / LMG 19005 / NCIMB 14063 / MR-1).